The primary structure comprises 171 residues: Large ribosomal subunit protein bL9 (171 aa).

It belongs to the bacterial ribosomal protein bL9 family.

Functionally, binds to the 23S rRNA. This chain is Large ribosomal subunit protein bL9, found in Rickettsia africae (strain ESF-5).